The sequence spans 560 residues: Nibrin homolog (560 aa).

The FHA domain maps to 25-87 (YKVGRKDCDV…YGTFFNKVQG (63 aa)). Positions 115 to 190 (TFRLSFVPIV…KQIVLGDWFK (76 aa)) constitute a BRCT domain.

Belongs to the Nibrin family. As to quaternary structure, component of the MRN complex composed of two heterodimers RAD50 and MRE11 associated with a single NBS1. In terms of tissue distribution, mostly expressed in the shoot apex and young flower, but also in young leaves, root tips and stamen, tissues where frequent cell division or meiosis may occur.

It is found in the nucleus. It localises to the chromosome. Its function is as follows. Component of the MRN complex, which plays a central role in double-strand break (DSB) repair, DNA recombination, maintenance of telomere integrity and meiosis. The MRN complex is involved in the repair of DNA double-strand breaks (DSBs) via homologous recombination (HR), an error-free mechanism which primarily occurs during S and G2 phases. The complex (1) mediates the end resection of damaged DNA, which generates proper single-stranded DNA, a key initial steps in HR, and is (2) required for the recruitment of other repair factors and efficient activation of ATM and ATR upon DNA damage. The MRN complex possesses single-strand endonuclease activity and double-strand-specific 3'-5' exonuclease activity, which are provided by MRE11, to initiate end resection, which is required for single-strand invasion and recombination. Within the MRN complex, NBS1 acts as a protein-protein adapter, which specifically recognizes and binds phosphorylated proteins, promoting their recruitment to DNA damage sites. Recruits MRE11 and RAD50 components of the MRN complex to DSBs in response to DNA damage. The chain is Nibrin homolog from Oryza sativa subsp. japonica (Rice).